A 530-amino-acid polypeptide reads, in one-letter code: Chaperonin GroEL 2 (530 aa).

ATP is bound by residues 30 to 33 (TLGP), lysine 51, 87 to 91 (DGTTT), glycine 415, 479 to 481 (NAA), and aspartate 495.

This sequence belongs to the chaperonin (HSP60) family. As to quaternary structure, forms a cylinder of 14 subunits composed of two heptameric rings stacked back-to-back. Interacts with the co-chaperonin GroES.

The protein resides in the cytoplasm. It catalyses the reaction ATP + H2O + a folded polypeptide = ADP + phosphate + an unfolded polypeptide.. Functionally, together with its co-chaperonin GroES, plays an essential role in assisting protein folding. The GroEL-GroES system forms a nano-cage that allows encapsulation of the non-native substrate proteins and provides a physical environment optimized to promote and accelerate protein folding. This Vibrio cholerae serotype O1 (strain ATCC 39315 / El Tor Inaba N16961) protein is Chaperonin GroEL 2.